The following is a 371-amino-acid chain: tRNA-specific 2-thiouridylase MnmA (371 aa).

ATP contacts are provided by residues 14–21 and Met-40; that span reads GMSGGVDS. The tract at residues 100–102 is interaction with target base in tRNA; the sequence is NPD. Cys-105 functions as the Nucleophile in the catalytic mechanism. A disulfide bridge links Cys-105 with Cys-201. Gly-129 provides a ligand contact to ATP. The tract at residues 151–153 is interaction with tRNA; it reads KDQ. Cys-201 functions as the Cysteine persulfide intermediate in the catalytic mechanism. Positions 309-310 are interaction with tRNA; it reads RY.

The protein belongs to the MnmA/TRMU family.

It is found in the cytoplasm. It carries out the reaction S-sulfanyl-L-cysteinyl-[protein] + uridine(34) in tRNA + AH2 + ATP = 2-thiouridine(34) in tRNA + L-cysteinyl-[protein] + A + AMP + diphosphate + H(+). Its function is as follows. Catalyzes the 2-thiolation of uridine at the wobble position (U34) of tRNA, leading to the formation of s(2)U34. This is tRNA-specific 2-thiouridylase MnmA from Halalkalibacterium halodurans (strain ATCC BAA-125 / DSM 18197 / FERM 7344 / JCM 9153 / C-125) (Bacillus halodurans).